The sequence spans 56 residues: Mitoregulin (56 aa).

At 2 to 9 the chain is on the mitochondrial matrix side; it reads ADVSERTL. The chain crosses the membrane as a helical span at residues 10-27; it reads QVSVLVAFASGVVLGWQA. At 28–56 the chain is on the mitochondrial intermembrane side; that stretch reads NRLRRRYLDWRKRRLQDKLATTQKKLDLA.

The protein belongs to the mitoregulin family. Interacts with mitochondrial trifunctional enzyme, a heterotetrameric complex composed of 2 HADHA subunits and 2 HADHB subunits. Interacts with cytochrome b5 reductase CYB5R3; the interaction is required to maintain cellular lipid composition and leads to stimulation of mitochondrial respiratory complex I activity. Interacts with ATP synthase subunit ATP5F1B/ATP5B. As to expression, enriched in heart and skeletal muscle (at protein level). Also enriched in adipose tissue with lower levels detected in liver, pancreas and brain (at protein level). Higher levels in differentiated myotubes than in satellite cells.

Its subcellular location is the mitochondrion inner membrane. In terms of biological role, positively regulates mitochondrial complex assembly and/or stability. Increases mitochondrial membrane potential while decreasing mitochondrial reactive oxygen species. Increases mitochondrial respiration rate. Increased mitochondrial respiratory activity promotes myogenic differentiation which facilitates muscle growth and regeneration. Increases mitochondrial calcium retention capacity. Plays a role in maintenance of cellular lipid composition through its interaction with cytochrome b5 reductase CYB5R3 which is required for mitochondrial respiratory complex I activity. Interacts with the mitochondrial trifunctional enzyme complex (MTE) and enhances fatty acid beta-oxidation. Not required for MTE formation or stability. Modulates triglyceride clearance in adipocytes through its role in regulating fatty acid beta-oxidation and lipolysis. The chain is Mitoregulin from Mus musculus (Mouse).